Reading from the N-terminus, the 72-residue chain is Toxin Acra II-3 (72 aa).

Residues 4 to 67 (PGNYPLDTRG…VWNAAKNYCK (64 aa)) enclose the LCN-type CS-alpha/beta domain. 3 disulfides stabilise this stretch: Cys18–Cys41, Cys27–Cys46, and Cys31–Cys48.

This sequence belongs to the long (3 C-C) scorpion toxin superfamily. Sodium channel inhibitor family. Beta subfamily. In terms of tissue distribution, expressed by the venom gland.

The protein localises to the secreted. Functionally, binds to sodium channels (Nav) and affects the channel activation process. In Androctonus crassicauda (Arabian fat-tailed scorpion), this protein is Toxin Acra II-3.